We begin with the raw amino-acid sequence, 149 residues long: Glutamyl-tRNA(Gln) amidotransferase subunit C, mitochondrial (149 aa).

The protein belongs to the GatC family. As to quaternary structure, subunit of the heterotrimeric GatCAB amidotransferase (AdT) complex, composed of A, B and C subunits.

It is found in the mitochondrion. It catalyses the reaction L-glutamyl-tRNA(Gln) + L-glutamine + ATP + H2O = L-glutaminyl-tRNA(Gln) + L-glutamate + ADP + phosphate + H(+). Functionally, allows the formation of correctly charged Gln-tRNA(Gln) through the transamidation of misacylated Glu-tRNA(Gln) in the mitochondria. The reaction takes place in the presence of glutamine and ATP through an activated gamma-phospho-Glu-tRNA(Gln). In Trichoplax adhaerens (Trichoplax reptans), this protein is Glutamyl-tRNA(Gln) amidotransferase subunit C, mitochondrial.